A 178-amino-acid polypeptide reads, in one-letter code: Phosphopantetheine adenylyltransferase (178 aa).

Thr17 lines the substrate pocket. Residues 17-18 (TF) and His25 each bind ATP. Substrate-binding residues include Lys49, Leu86, and Arg100. Residues 101–103 (GLR), Glu111, and 136–142 (LQPVASR) each bind ATP.

The protein belongs to the bacterial CoaD family. In terms of assembly, homohexamer. Mg(2+) serves as cofactor.

It localises to the cytoplasm. The catalysed reaction is (R)-4'-phosphopantetheine + ATP + H(+) = 3'-dephospho-CoA + diphosphate. It participates in cofactor biosynthesis; coenzyme A biosynthesis; CoA from (R)-pantothenate: step 4/5. Its function is as follows. Reversibly transfers an adenylyl group from ATP to 4'-phosphopantetheine, yielding dephospho-CoA (dPCoA) and pyrophosphate. The protein is Phosphopantetheine adenylyltransferase of Zymomonas mobilis subsp. mobilis (strain ATCC 31821 / ZM4 / CP4).